The primary structure comprises 234 residues: Toxic shock syndrome toxin-1 (234 aa).

The first 40 residues, 1 to 40, serve as a signal peptide directing secretion; sequence MNKKLLMNFFIVSPLLLATTATDFTPVPLSSNQIIKTAKA.

Belongs to the staphylococcal/streptococcal toxin family.

Its subcellular location is the secreted. Functionally, responsible for the symptoms of toxic shock syndrome. The chain is Toxic shock syndrome toxin-1 (tst) from Staphylococcus aureus.